The following is a 696-amino-acid chain: DNA ligase (696 aa).

NAD(+) contacts are provided by residues 36-40 (DAVYD), 85-86 (SL), and Glu-124. Catalysis depends on Lys-126, which acts as the N6-AMP-lysine intermediate. NAD(+) contacts are provided by Arg-147, Glu-184, Lys-308, and Lys-332. 4 residues coordinate Zn(2+): Cys-426, Cys-429, Cys-444, and Cys-449. The region spanning 618–696 (QRTVSLQGQT…EEELLKLLAS (79 aa)) is the BRCT domain.

Belongs to the NAD-dependent DNA ligase family. LigA subfamily. The cofactor is Mg(2+). Mn(2+) serves as cofactor.

It carries out the reaction NAD(+) + (deoxyribonucleotide)n-3'-hydroxyl + 5'-phospho-(deoxyribonucleotide)m = (deoxyribonucleotide)n+m + AMP + beta-nicotinamide D-nucleotide.. Its function is as follows. DNA ligase that catalyzes the formation of phosphodiester linkages between 5'-phosphoryl and 3'-hydroxyl groups in double-stranded DNA using NAD as a coenzyme and as the energy source for the reaction. It is essential for DNA replication and repair of damaged DNA. This Prochlorococcus marinus (strain MIT 9303) protein is DNA ligase.